The following is a 466-amino-acid chain: Argininosuccinate lyase (466 aa).

This sequence belongs to the lyase 1 family. Argininosuccinate lyase subfamily.

The protein resides in the cytoplasm. It carries out the reaction 2-(N(omega)-L-arginino)succinate = fumarate + L-arginine. The protein operates within amino-acid biosynthesis; L-arginine biosynthesis; L-arginine from L-ornithine and carbamoyl phosphate: step 3/3. This Brucella canis (strain ATCC 23365 / NCTC 10854 / RM-666) protein is Argininosuccinate lyase.